A 132-amino-acid polypeptide reads, in one-letter code: uncharacterized protein (132 aa).

2 disordered regions span residues 36-69 (GLASTPSLRPRPRPWEGQLQHQSHQGSLDKPNIS) and 97-132 (QINDSDNDNDDNNNDNNKGDGNDDDNNTVTANPTAR). Phosphoserine is present on Ser-101.

As to quaternary structure, copurifies with proteins HOL1, MMP1, PEX7 and PLB1.

This is an uncharacterized protein from Saccharomyces cerevisiae (strain ATCC 204508 / S288c) (Baker's yeast).